Reading from the N-terminus, the 104-residue chain is Putative Fis-like DNA-binding protein (104 aa).

Positions 80–99 (QTKASELLGLNRGTLRKKLK) form a DNA-binding region, H-T-H motif.

This sequence belongs to the transcriptional regulatory Fis family.

This chain is Putative Fis-like DNA-binding protein, found in Pseudomonas aeruginosa (strain ATCC 15692 / DSM 22644 / CIP 104116 / JCM 14847 / LMG 12228 / 1C / PRS 101 / PAO1).